A 337-amino-acid chain; its full sequence is 15-cis-phytoene synthase (337 aa).

The protein belongs to the phytoene/squalene synthase family. ATP is required as a cofactor. It depends on Mn(2+) as a cofactor. The cofactor is Mg(2+).

The enzyme catalyses 2 (2E,6E,10E)-geranylgeranyl diphosphate = 15-cis-phytoene + 2 diphosphate. It participates in carotenoid biosynthesis; phytoene biosynthesis. Functionally, involved in the biosynthesis of carotenoids. Catalyzes the condensation of two molecules of geranylgeranyl diphosphate (GGPP) to give prephytoene diphosphate (PPPP) and the subsequent rearrangement of the cyclopropylcarbinyl intermediate to yield 15-cis-phytoene. This is 15-cis-phytoene synthase (crtB) from Synechocystis sp. (strain ATCC 27184 / PCC 6803 / Kazusa).